A 534-amino-acid chain; its full sequence is Dual specificity calcium/calmodulin-dependent 3',5'-cyclic nucleotide phosphodiesterase 1B (534 aa).

Residues 1-21 form a disordered region; the sequence is MELSPRSPPEMLESDCPSPLE. Phosphoserine occurs at positions 7 and 14. 2 calmodulin-binding regions span residues 27 to 47 and 116 to 139; these read SKKM…QLEN and EKPK…MFRR. The PDEase domain occupies 144-501; it reads VGPTYSTAVL…QKWKERAASG (358 aa). The active-site Proton donor is His221. Zn(2+)-binding residues include His225, His261, Asp262, and Asp368. Asp262 serves as a coordination point for Mg(2+). Disordered stretches follow at residues 442-473 and 494-534; these read VQPT…GDPN and WKER…GNLD. The span at 453–462 shows a compositional bias: polar residues; that stretch reads KNQPSFQWRQ. 2 positions are modified to phosphoserine: Ser464 and Ser512.

This sequence belongs to the cyclic nucleotide phosphodiesterase family. PDE1 subfamily. As to quaternary structure, homodimer. Zn(2+) serves as cofactor. Mg(2+) is required as a cofactor. As to expression, expressed in central nervous system regions. Most abundant in basal ganglia. Also found in kidney papilla and adrenal medulla.

Its subcellular location is the cytoplasm. The protein resides in the cytosol. The enzyme catalyses a nucleoside 3',5'-cyclic phosphate + H2O = a nucleoside 5'-phosphate + H(+). It catalyses the reaction 3',5'-cyclic GMP + H2O = GMP + H(+). It carries out the reaction 3',5'-cyclic AMP + H2O = AMP + H(+). With respect to regulation, type I PDE are activated by the binding of calmodulin in the presence of Ca(2+). Functionally, cyclic nucleotide phosphodiesterase with a dual specificity for the second messengers cAMP and cGMP, which are key regulators of many important physiological processes. Has a preference for cGMP as a substrate. This is Dual specificity calcium/calmodulin-dependent 3',5'-cyclic nucleotide phosphodiesterase 1B from Bos taurus (Bovine).